The sequence spans 116 residues: Insulin (116 aa).

Positions 1–24 (MAALWLQSFSLLVLLVVSWPGSQA) are cleaved as a signal peptide. 3 disulfide bridges follow: cysteine 32-cysteine 102, cysteine 44-cysteine 115, and cysteine 101-cysteine 106. The propeptide at 56 to 93 (DVDQLLGFLPPKSGGAAAAGADNEVAEFAFKDQMEMMV) is c peptide.

This sequence belongs to the insulin family. In terms of assembly, heterodimer of a B chain and an A chain linked by two disulfide bonds.

The protein resides in the secreted. Insulin decreases blood glucose concentration. It increases cell permeability to monosaccharides, amino acids and fatty acids. It accelerates glycolysis, the pentose phosphate cycle, and glycogen synthesis in liver. The chain is Insulin (ins) from Lophius americanus (American angler).